The chain runs to 184 residues: MNKGNLIKNYAVALLNNAMVDNIQDKIFEEITSINRIITDNFDIREFLFSPIVNKNDKINAVNLLAKNIKISTIVQNFLLLLVKNSRTAILSNIVNAYNTLLYESKNIKIVQVISANKLQPKEQEWIKSRIEKELNQKTEILFDIDNTIIGGIVIKYDSMLQDYSIKGSLEKIKKALKTVNIAV.

This sequence belongs to the ATPase delta chain family. F-type ATPases have 2 components, F(1) - the catalytic core - and F(0) - the membrane proton channel. F(1) has five subunits: alpha(3), beta(3), gamma(1), delta(1), epsilon(1). F(0) has three main subunits: a(1), b(2) and c(10-14). The alpha and beta chains form an alternating ring which encloses part of the gamma chain. F(1) is attached to F(0) by a central stalk formed by the gamma and epsilon chains, while a peripheral stalk is formed by the delta and b chains.

The protein localises to the cell membrane. In terms of biological role, f(1)F(0) ATP synthase produces ATP from ADP in the presence of a proton or sodium gradient. F-type ATPases consist of two structural domains, F(1) containing the extramembraneous catalytic core and F(0) containing the membrane proton channel, linked together by a central stalk and a peripheral stalk. During catalysis, ATP synthesis in the catalytic domain of F(1) is coupled via a rotary mechanism of the central stalk subunits to proton translocation. Its function is as follows. This protein is part of the stalk that links CF(0) to CF(1). It either transmits conformational changes from CF(0) to CF(1) or is implicated in proton conduction. The chain is ATP synthase subunit delta from Rickettsia africae (strain ESF-5).